The sequence spans 233 residues: Phosphatidylserine decarboxylase proenzyme (233 aa).

S201 serves as the catalytic Schiff-base intermediate with substrate; via pyruvic acid. S201 carries the pyruvic acid (Ser); by autocatalysis modification.

Belongs to the phosphatidylserine decarboxylase family. PSD-A subfamily. Heterodimer of a large membrane-associated beta subunit and a small pyruvoyl-containing alpha subunit. Pyruvate serves as cofactor. In terms of processing, is synthesized initially as an inactive proenzyme. Formation of the active enzyme involves a self-maturation process in which the active site pyruvoyl group is generated from an internal serine residue via an autocatalytic post-translational modification. Two non-identical subunits are generated from the proenzyme in this reaction, and the pyruvate is formed at the N-terminus of the alpha chain, which is derived from the carboxyl end of the proenzyme. The post-translation cleavage follows an unusual pathway, termed non-hydrolytic serinolysis, in which the side chain hydroxyl group of the serine supplies its oxygen atom to form the C-terminus of the beta chain, while the remainder of the serine residue undergoes an oxidative deamination to produce ammonia and the pyruvoyl prosthetic group on the alpha chain.

The protein resides in the cell membrane. The catalysed reaction is a 1,2-diacyl-sn-glycero-3-phospho-L-serine + H(+) = a 1,2-diacyl-sn-glycero-3-phosphoethanolamine + CO2. It functions in the pathway phospholipid metabolism; phosphatidylethanolamine biosynthesis; phosphatidylethanolamine from CDP-diacylglycerol: step 2/2. Its function is as follows. Catalyzes the formation of phosphatidylethanolamine (PtdEtn) from phosphatidylserine (PtdSer). In Mycolicibacterium vanbaalenii (strain DSM 7251 / JCM 13017 / BCRC 16820 / KCTC 9966 / NRRL B-24157 / PYR-1) (Mycobacterium vanbaalenii), this protein is Phosphatidylserine decarboxylase proenzyme.